A 242-amino-acid polypeptide reads, in one-letter code: Probable ergothioneine transport ATP-binding protein EgtUA (242 aa).

The region spanning 2-236 (IEYKNVALRY…PATDFVADLF (235 aa)) is the ABC transporter domain. An ATP-binding site is contributed by 34-41 (GPSGSGKT).

The protein belongs to the ABC transporter superfamily. The complex is probably composed of at least an ATP-binding protein (EgtUA) and a transmembrane protein (EgtUBC).

The protein resides in the cell inner membrane. It catalyses the reaction ergothioneine(out) + ATP + H2O = ergothioneine(in) + ADP + phosphate + H(+). Functionally, part of an ABC transporter complex EgtU required for the uptake of ergothioneine (EGT), a natural low-molecular weight (LMW) thiol antioxidant. Probably responsible for energy coupling to the transport system. This chain is Probable ergothioneine transport ATP-binding protein EgtUA, found in Streptococcus pneumoniae serotype 2 (strain D39 / NCTC 7466).